Consider the following 122-residue polypeptide: Large ribosomal subunit protein uL14 (122 aa).

The protein belongs to the universal ribosomal protein uL14 family. As to quaternary structure, part of the 50S ribosomal subunit. Forms a cluster with proteins L3 and L19. In the 70S ribosome, L14 and L19 interact and together make contacts with the 16S rRNA in bridges B5 and B8.

In terms of biological role, binds to 23S rRNA. Forms part of two intersubunit bridges in the 70S ribosome. The sequence is that of Large ribosomal subunit protein uL14 from Exiguobacterium sp. (strain ATCC BAA-1283 / AT1b).